A 419-amino-acid polypeptide reads, in one-letter code: NFATC2-interacting protein (419 aa).

Disordered stretches follow at residues 1–131 and 151–215; these read MAEP…GKVK and DEEE…HTRA. Gly residues predominate over residues 11-27; that stretch reads WSGGSGAGRGGRGGWGG. A compositionally biased stretch (low complexity) spans 35–51; that stretch reads QRSPSRGTLDVVSVDLV. 6 positions are modified to phosphoserine: S54, S84, S88, S90, S92, and S127. Glycyl lysine isopeptide (Lys-Gly) (interchain with G-Cter in SUMO2) cross-links involve residues K129 and K131. A compositionally biased stretch (basic and acidic residues) spans 180 to 192; it reads RTKDKEEKKKTEF. Residues S198, S201, S204, S220, and S314 each carry the phosphoserine modification. Residues 209–231 are a coiled coil; sequence SRTHTRALKKLSEVNKRLQDLRS. Phosphothreonine occurs at positions 316 and 318. In terms of domain architecture, Ubiquitin-like spans 348–419; that stretch reads LQLRVQGKEK…ESGDLIEVWG (72 aa). A phosphoserine mark is found at S369 and S390.

As to quaternary structure, interacts with NFATC2, TRAF1, TRAF2 and PRMT1. Interacts with UBE2I/UBC9. In terms of processing, methylation at the N-terminus by PRMT1 modulates interaction with the NFAT complex and results in augmented cytokine production.

Its subcellular location is the nucleus. The protein localises to the cytoplasm. In terms of biological role, in T-helper 2 (Th2) cells, regulates the magnitude of NFAT-driven transcription of a specific subset of cytokine genes, including IL3, IL4, IL5 and IL13, but not IL2. Recruits PRMT1 to the IL4 promoter; this leads to enhancement of histone H4 'Arg-3'-methylation and facilitates subsequent histone acetylation at the IL4 locus, thus promotes robust cytokine expression. Down-regulates formation of poly-SUMO chains by UBE2I/UBC9. This is NFATC2-interacting protein (NFATC2IP) from Homo sapiens (Human).